The chain runs to 200 residues: Outer-membrane lipoprotein carrier protein (200 aa).

A signal peptide spans 1–18 (MIGLFLAAPLVLSSAVWA).

This sequence belongs to the LolA family. In terms of assembly, monomer.

The protein localises to the periplasm. In terms of biological role, participates in the translocation of lipoproteins from the inner membrane to the outer membrane. Only forms a complex with a lipoprotein if the residue after the N-terminal Cys is not an aspartate (The Asp acts as a targeting signal to indicate that the lipoprotein should stay in the inner membrane). This chain is Outer-membrane lipoprotein carrier protein, found in Photobacterium profundum (strain SS9).